The chain runs to 336 residues: HTH-type transcriptional repressor PurR (336 aa).

An HTH lacI-type domain is found at 2-56 (ATIKDVAKMAGVSTTTVSHVINKTRFVAKDTEEAVLSAIKQLNYSPSAVARSLKV). Residues 4 to 23 (IKDVAKMAGVSTTTVSHVIN) constitute a DNA-binding region (H-T-H motif). A DNA-binding region spans residues 48–56 (SAVARSLKV). Positions 73, 188, 190, 219, and 273 each coordinate hypoxanthine.

In terms of assembly, homodimer.

It functions in the pathway purine metabolism; purine nucleotide biosynthesis [regulation]. Functionally, is the main repressor of the genes involved in the de novo synthesis of purine nucleotides, regulating purB, purC, purEK, purF, purHD, purL, purMN and guaBA expression. PurR is allosterically activated to bind its cognate DNA by binding the purine corepressors, hypoxanthine or guanine, thereby effecting transcription repression. This chain is HTH-type transcriptional repressor PurR, found in Haemophilus influenzae (strain PittGG).